A 113-amino-acid polypeptide reads, in one-letter code: MMSRTESRYSSQRTWLLSMVVLAALWSISVQRATARVINDDCPNLIGNRDLYKRVEWICEDCSNIFRNTGMATLCRKNCFFNEDFLWCVYATERTEEMSQLRQWVGILGAGRE.

Positions 1–35 (MMSRTESRYSSQRTWLLSMVVLAALWSISVQRATA) are cleaved as a signal peptide. 3 disulfides stabilise this stretch: Cys42–Cys79, Cys59–Cys75, and Cys62–Cys88.

It belongs to the arthropod CHH/MIH/GIH/VIH hormone family.

It is found in the secreted. Its function is as follows. Inhibits Y-organs where molting hormone (ecdysteroid) is secreted. A molting cycle is initiated when MIH secretion diminishes or stops. The protein is Molt-inhibiting hormone of Metacarcinus magister (Dungeness crab).